A 290-amino-acid polypeptide reads, in one-letter code: GTPase Era (290 aa).

The Era-type G domain maps to 2 to 169 (KSGFVSIIGR…KDKIYANLQE (168 aa)). Residues 10–17 (GRPSTGKS) are G1. Residue 10–17 (GRPSTGKS) participates in GTP binding. The interval 36–40 (QTTRN) is G2. Positions 57-60 (DTPG) are G3. GTP-binding positions include 57 to 61 (DTPGF) and 119 to 122 (NKID). The segment at 119-122 (NKID) is G4. Positions 148–150 (ISA) are G5. The KH type-2 domain maps to 200–276 (LKEELPYSLY…DLFLQVKLRK (77 aa)).

Belongs to the TRAFAC class TrmE-Era-EngA-EngB-Septin-like GTPase superfamily. Era GTPase family. In terms of assembly, monomer.

It is found in the cytoplasm. It localises to the cell inner membrane. An essential GTPase that binds both GDP and GTP, with rapid nucleotide exchange. Plays a role in 16S rRNA processing and 30S ribosomal subunit biogenesis and possibly also in cell cycle regulation and energy metabolism. The chain is GTPase Era from Borrelia hermsii (strain HS1 / DAH).